The sequence spans 201 residues: tRNA (guanine-N(7)-)-methyltransferase (201 aa).

Positions 34, 59, 86, and 107 each coordinate S-adenosyl-L-methionine. The active site involves Asp-107. Residues Lys-111, Asp-143, and 181 to 184 (TDYE) contribute to the substrate site.

The protein belongs to the class I-like SAM-binding methyltransferase superfamily. TrmB family.

It catalyses the reaction guanosine(46) in tRNA + S-adenosyl-L-methionine = N(7)-methylguanosine(46) in tRNA + S-adenosyl-L-homocysteine. It functions in the pathway tRNA modification; N(7)-methylguanine-tRNA biosynthesis. Functionally, catalyzes the formation of N(7)-methylguanine at position 46 (m7G46) in tRNA. This chain is tRNA (guanine-N(7)-)-methyltransferase, found in Mycoplasma mobile (strain ATCC 43663 / 163K / NCTC 11711) (Mesomycoplasma mobile).